A 92-amino-acid polypeptide reads, in one-letter code: Small ribosomal subunit protein uS17 (92 aa).

This sequence belongs to the universal ribosomal protein uS17 family. Part of the 30S ribosomal subunit.

Its function is as follows. One of the primary rRNA binding proteins, it binds specifically to the 5'-end of 16S ribosomal RNA. This Cupriavidus pinatubonensis (strain JMP 134 / LMG 1197) (Cupriavidus necator (strain JMP 134)) protein is Small ribosomal subunit protein uS17.